The chain runs to 1488 residues: Chromosome partition protein MukB (1488 aa).

Residue 34–41 (GGNGAGKS) participates in ATP binding. Coiled coils occupy residues 326–418 (LEAD…QYNQ), 444–472 (LDTF…QTAH), and 509–602 (RHLA…RRAP). The tract at residues 666–783 (PGGAEDQRLN…SLPIFGRAAR (118 aa)) is flexible hinge. 3 coiled-coil regions span residues 835-923 (EAEI…AKLE), 977-1116 (EMLS…AKAG), and 1209-1265 (VEAI…LQSV). The disordered stretch occupies residues 1049-1074 (ADSGAEERARQRRDELHAQLSNNRSR). Residues 1051–1065 (SGAEERARQRRDELH) are compositionally biased toward basic and acidic residues.

Belongs to the SMC family. MukB subfamily. Homodimerization via its hinge domain. Binds to DNA via its C-terminal region. Interacts, and probably forms a ternary complex, with MukE and MukF via its C-terminal region. The complex formation is stimulated by calcium or magnesium. Interacts with tubulin-related protein FtsZ.

It is found in the cytoplasm. It localises to the nucleoid. In terms of biological role, plays a central role in chromosome condensation, segregation and cell cycle progression. Functions as a homodimer, which is essential for chromosome partition. Involved in negative DNA supercoiling in vivo, and by this means organize and compact chromosomes. May achieve or facilitate chromosome segregation by condensation DNA from both sides of a centrally located replisome during cell division. The protein is Chromosome partition protein MukB of Salmonella heidelberg (strain SL476).